The primary structure comprises 64 residues: Conotoxin Mr3.5 (64 aa).

The signal sequence occupies residues 1–19; the sequence is MSKLGVLLTICLLLFPLTA. Residues 20–46 constitute a propeptide that is removed on maturation; sequence LPLDGDQPADQRAERTQAEKHSLPDPR. Disulfide bonds link C49/C58, C50/C62, and C54/C63. A Cysteine amide modification is found at C63.

Belongs to the conotoxin M superfamily. As to expression, expressed by the venom duct.

It localises to the secreted. This is Conotoxin Mr3.5 from Conus marmoreus (Marble cone).